The sequence spans 502 residues: Glycerol kinase (502 aa).

Threonine 13 is a binding site for ADP. The ATP site is built by threonine 13, threonine 14, and serine 15. Threonine 13 is a binding site for sn-glycerol 3-phosphate. Arginine 17 contacts ADP. Sn-glycerol 3-phosphate is bound by residues arginine 83, glutamate 84, tyrosine 136, and aspartate 246. The glycerol site is built by arginine 83, glutamate 84, tyrosine 136, aspartate 246, and glutamine 247. ADP-binding residues include threonine 268 and glycine 311. ATP is bound by residues threonine 268, glycine 311, glutamine 315, and glycine 412. Glycine 412 and asparagine 416 together coordinate ADP.

This sequence belongs to the FGGY kinase family.

The enzyme catalyses glycerol + ATP = sn-glycerol 3-phosphate + ADP + H(+). Its pathway is polyol metabolism; glycerol degradation via glycerol kinase pathway; sn-glycerol 3-phosphate from glycerol: step 1/1. Inhibited by fructose 1,6-bisphosphate (FBP). Functionally, key enzyme in the regulation of glycerol uptake and metabolism. Catalyzes the phosphorylation of glycerol to yield sn-glycerol 3-phosphate. This is Glycerol kinase from Francisella tularensis subsp. tularensis (strain WY96-3418).